A 275-amino-acid chain; its full sequence is 2,3,4,5-tetrahydropyridine-2,6-dicarboxylate N-succinyltransferase (275 aa).

This sequence belongs to the transferase hexapeptide repeat family.

Its subcellular location is the cytoplasm. The enzyme catalyses (S)-2,3,4,5-tetrahydrodipicolinate + succinyl-CoA + H2O = (S)-2-succinylamino-6-oxoheptanedioate + CoA. Its pathway is amino-acid biosynthesis; L-lysine biosynthesis via DAP pathway; LL-2,6-diaminopimelate from (S)-tetrahydrodipicolinate (succinylase route): step 1/3. The sequence is that of 2,3,4,5-tetrahydropyridine-2,6-dicarboxylate N-succinyltransferase from Burkholderia ambifaria (strain MC40-6).